A 454-amino-acid polypeptide reads, in one-letter code: MLQVLRVSAPCFAFVDTIGSIGVCRVVRFTTFHNTPIEVYNKKVNDGVWKRDPYQETAVKAINRLYTELESYTQPPITQDSMPAEKGSILSWISPLKKMFSRKKSPTLTSSLPVPGMPKGIYLYGDVGCGKTALMDLFYHNLPPNVTRSQRIHFHAFMMQVHRTSHDLQDRYGFEIDFIDHIASGIAKETTVLCFDELQVTDVADALLLRRLFEALMKYGVVIFITSNRAPSDLYKNGIQRESFIPCIKLLEHRLQVICLDSPNDYRRLKSKTEDTYLYPANSPEVKKALENWFLCYADEKDPAHQDEVEVFGRKIIVPKASGNVAWFTFEQLCGEPKSAADYLSLASRYHVFIVSDIPKLSIESKDLIHRFITFIDALYDTHGKLILSSEVPVQEIYPTAPSEVLSSTADPAAKGKIESHYHGAFGGIEEVFTFTRCLSRLSEMKKQSWIHSP.

125-132 (GDVGCGKT) is a binding site for ATP.

It belongs to the AFG1 ATPase family.

This is an uncharacterized protein from Schizosaccharomyces pombe (strain 972 / ATCC 24843) (Fission yeast).